Here is a 246-residue protein sequence, read N- to C-terminus: Pyridoxine 5'-phosphate synthase (246 aa).

N12 provides a ligand contact to 3-amino-2-oxopropyl phosphate. 14–15 lines the 1-deoxy-D-xylulose 5-phosphate pocket; the sequence is DH. Position 23 (R23) interacts with 3-amino-2-oxopropyl phosphate. H48 acts as the Proton acceptor in catalysis. The 1-deoxy-D-xylulose 5-phosphate site is built by R50 and H55. E75 acts as the Proton acceptor in catalysis. A 1-deoxy-D-xylulose 5-phosphate-binding site is contributed by T105. H196 acts as the Proton donor in catalysis. Residues G197 and 218–219 contribute to the 3-amino-2-oxopropyl phosphate site; that span reads GH.

The protein belongs to the PNP synthase family. As to quaternary structure, homooctamer; tetramer of dimers.

The protein localises to the cytoplasm. The enzyme catalyses 3-amino-2-oxopropyl phosphate + 1-deoxy-D-xylulose 5-phosphate = pyridoxine 5'-phosphate + phosphate + 2 H2O + H(+). The protein operates within cofactor biosynthesis; pyridoxine 5'-phosphate biosynthesis; pyridoxine 5'-phosphate from D-erythrose 4-phosphate: step 5/5. Functionally, catalyzes the complicated ring closure reaction between the two acyclic compounds 1-deoxy-D-xylulose-5-phosphate (DXP) and 3-amino-2-oxopropyl phosphate (1-amino-acetone-3-phosphate or AAP) to form pyridoxine 5'-phosphate (PNP) and inorganic phosphate. This is Pyridoxine 5'-phosphate synthase from Pseudomonas syringae pv. tomato (strain ATCC BAA-871 / DC3000).